Reading from the N-terminus, the 422-residue chain is MVTLDKSKDLFDKARKILPGGVSSPVRAIKPYPFYTESANGCRIKDVDGNEYIDYCLAYGPNILGHANPVIKQAIIDQLDKGWLYGTPTGLEVTLGEKIASLYPSIDMLRFVSTGTEATMSALRAARGFTCKNKFVKIEGGFHGAHDAVLVKAGSGATTHGKPDSLGIPEDFTKNTLQVAYNDIEAMTEVIESNQDDMAAVIMEPVLGNIGPILPEGDYLKEVRKVTEENDVVLIFDEVITGFRLAMGGAQEYFGVTPDMTTLGKIVGGGLPIGVFGGKREILEMISPSGSVYQAGTFSGSPASVAAGIAAVDVLEKEKVHEKLEATGNMLRAGLNDIIADKRLDFHVGGIASMFKVFFGDKPLNYQDVLKCDKEGYLQFFHDMLDSNVFLPPSQFETNFLSTAHTEADLETTLEAYAVNLK.

Lysine 265 carries the N6-(pyridoxal phosphate)lysine modification.

The protein belongs to the class-III pyridoxal-phosphate-dependent aminotransferase family. HemL subfamily. Requires pyridoxal 5'-phosphate as cofactor.

It is found in the cytoplasm. The enzyme catalyses (S)-4-amino-5-oxopentanoate = 5-aminolevulinate. The protein operates within porphyrin-containing compound metabolism; protoporphyrin-IX biosynthesis; 5-aminolevulinate from L-glutamyl-tRNA(Glu): step 2/2. This Methanococcoides burtonii (strain DSM 6242 / NBRC 107633 / OCM 468 / ACE-M) protein is Glutamate-1-semialdehyde 2,1-aminomutase.